Reading from the N-terminus, the 260-residue chain is Putative protein phosphatase (260 aa).

A PPM-type phosphatase domain is found at 9 to 254 (FTGLSKKGPV…DNITAALVNL (246 aa)).

The enzyme catalyses O-phospho-L-seryl-[protein] + H2O = L-seryl-[protein] + phosphate. The catalysed reaction is O-phospho-L-threonyl-[protein] + H2O = L-threonyl-[protein] + phosphate. The protein is Putative protein phosphatase of Mycoplasma genitalium (strain ATCC 33530 / DSM 19775 / NCTC 10195 / G37) (Mycoplasmoides genitalium).